Reading from the N-terminus, the 210-residue chain is uncharacterized protein (210 aa).

Helical transmembrane passes span 42 to 62 (ITLGIAFWGMLSMLGLAVLFV), 66 to 86 (ALHGVIMLLGGSYLAYLGFLM), 126 to 146 (VVVYFSSVMSLVLVNITEMWQ), 147 to 167 (IILAFAVIVVETFCYFYVISL), and 189 to 209 (AGIVFLFFGCVLVYNGINEII).

This sequence belongs to the Rht family.

The protein resides in the cell membrane. This is an uncharacterized protein from Haemophilus influenzae (strain ATCC 51907 / DSM 11121 / KW20 / Rd).